Consider the following 144-residue polypeptide: Maximins 3/H9 type 2 (144 aa).

The N-terminal stretch at 1 to 18 is a signal peptide; that stretch reads MNFKYIVAVSFLIASAYA. 2 propeptides span residues 19-43 and 74-123; these read RSVQ…REIR and TAEE…KEKR. I143 bears the Isoleucine amide mark.

This sequence belongs to the bombinin family. As to expression, expressed by the skin glands.

Its subcellular location is the secreted. Its function is as follows. Maximin-3 shows antibacterial activity against both Gram-positive and Gram-negative bacteria. It also shows antimicrobial activity against the fungus C.albicans, but not against A.flavus nor P.uticale. It has little hemolytic activity. It possess a significant cytotoxicity against tumor cell lines. It possess a significant anti-HIV activity. It shows high spermicidal activity. Maximin-H9 shows antimicrobial activity against bacteria and against the fungus C.albicans. Shows strong hemolytic activity. The sequence is that of Maximins 3/H9 type 2 from Bombina maxima (Giant fire-bellied toad).